The sequence spans 100 residues: Urease subunit gamma (100 aa).

This sequence belongs to the urease gamma subunit family. Heterotrimer of UreA (gamma), UreB (beta) and UreC (alpha) subunits. Three heterotrimers associate to form the active enzyme.

It is found in the cytoplasm. The enzyme catalyses urea + 2 H2O + H(+) = hydrogencarbonate + 2 NH4(+). The protein operates within nitrogen metabolism; urea degradation; CO(2) and NH(3) from urea (urease route): step 1/1. This chain is Urease subunit gamma, found in Corynebacterium urealyticum (strain ATCC 43042 / DSM 7109).